Reading from the N-terminus, the 470-residue chain is Neuraminidase (470 aa).

Topologically, residues M1–S14 are intravirion. The segment at G11–T32 is involved in apical transport and lipid raft association. Residues L15–I35 form a helical membrane-spanning segment. A hypervariable stalk region region spans residues T32–T86. The Virion surface segment spans residues L36 to M470. 4 N-linked (GlcNAc...) asparagine; by host glycosylation sites follow: N46, N54, N67, and N84. The tract at residues I89 to M470 is head of neuraminidase. 8 cysteine pairs are disulfide-bonded: C90/C417, C122/C127, C182/C229, C231/C236, C277/C290, C279/C288, C316/C335, and C421/C446. Residue R116 participates in substrate binding. A glycan (N-linked (GlcNAc...) asparagine; by host) is linked at N144. D149 acts as the Proton donor/acceptor in catalysis. Substrate is bound at residue R150. E275–E276 is a substrate binding site. R291 contacts substrate. A Ca(2+)-binding site is contributed by D292. N-linked (GlcNAc...) asparagine; by host glycosylation occurs at N293. Residues G296 and D322 each contribute to the Ca(2+) site. R368 serves as a coordination point for substrate. N-linked (GlcNAc...) asparagine; by host glycosylation occurs at N398. Y402 (nucleophile) is an active-site residue.

This sequence belongs to the glycosyl hydrolase 34 family. In terms of assembly, homotetramer. Ca(2+) is required as a cofactor. N-glycosylated.

It is found in the virion membrane. The protein localises to the host apical cell membrane. The enzyme catalyses Hydrolysis of alpha-(2-&gt;3)-, alpha-(2-&gt;6)-, alpha-(2-&gt;8)- glycosidic linkages of terminal sialic acid residues in oligosaccharides, glycoproteins, glycolipids, colominic acid and synthetic substrates.. Inhibited by the neuraminidase inhibitors zanamivir (Relenza) and oseltamivir (Tamiflu). These drugs interfere with the release of progeny virus from infected cells and are effective against all influenza strains. Resistance to neuraminidase inhibitors is quite rare. Its function is as follows. Catalyzes the removal of terminal sialic acid residues from viral and cellular glycoconjugates. Cleaves off the terminal sialic acids on the glycosylated HA during virus budding to facilitate virus release. Additionally helps virus spread through the circulation by further removing sialic acids from the cell surface. These cleavages prevent self-aggregation and ensure the efficient spread of the progeny virus from cell to cell. Otherwise, infection would be limited to one round of replication. Described as a receptor-destroying enzyme because it cleaves a terminal sialic acid from the cellular receptors. May facilitate viral invasion of the upper airways by cleaving the sialic acid moieties on the mucin of the airway epithelial cells. Likely to plays a role in the budding process through its association with lipid rafts during intracellular transport. May additionally display a raft-association independent effect on budding. Plays a role in the determination of host range restriction on replication and virulence. Sialidase activity in late endosome/lysosome traffic seems to enhance virus replication. The sequence is that of Neuraminidase from Aves (Horse).